We begin with the raw amino-acid sequence, 726 residues long: MNNDHLTRRVEALREQIRYHNYRYYVLDEPVISDAEYDALMRELRALEAAHPELVTPDSPTQRVGAPPGEQFAKVQHVVPMLSLANASDEAEVRAWYDRVVRLLGNDARVAFVVEPKIDGLAVTLIYRNGILVRGATRGDGETGEDVTANLRTIPGIPLRLGAFASNPEGQTNGAPVQAVIPPLIEVRGEVYMRIADFLRLNEQLAASGEKVAANPRNAAAGSLRQKDPAITARRPLRFFAYGIGQIEGVQVQTQWETLNLLRTLGFPVNRDARRFERLDDALAYCREWMTRRDELEYEVDGVVIKIDSLAQQAQLGVVGRDPRWAIAFKFPAREAVSRLIDIVVNVGRTGVITPNAVIEPVNIGGVTVRNASLHNADYIAERDIRIGDYVIVKRAGDVIPYIVGPIVARRDGSERPWQMPATCPACGTPLERAEGEVAYRCPNFGICPAQITRRIEHFVSRGAMDIAGIGEKQVQLFVERGWVQDVADLYTLTPDHFANVEGYGPKRVANLLSAIAGSKNRPLHRLIVGLGIRYVGEVVAQILADHFGSLDALAAASADEIDALEGIGPAIAASVAAYFARPESKALIAKLKRAGVRTEAQETARASRGNALAGKTFVITGTLPSMSREEASALITAHGGKVSGSVSKKTDYLVIGAEPGGTKFAKAQELGIPMIDEAGLLALIGSGRTADDQATPASDRRAATASVPPSDDAPGSPRQLDFDLT.

Residues 34-38 (DAEYD), 83-84 (SL), and E115 each bind NAD(+). K117 functions as the N6-AMP-lysine intermediate in the catalytic mechanism. Residues R138, E190, K306, and K330 each contribute to the NAD(+) site. C424, C427, C442, and C448 together coordinate Zn(2+). The BRCT domain maps to 608–698 (SRGNALAGKT…RTADDQATPA (91 aa)). Residues 690-726 (TADDQATPASDRRAATASVPPSDDAPGSPRQLDFDLT) form a disordered region.

Belongs to the NAD-dependent DNA ligase family. LigA subfamily. Mg(2+) serves as cofactor. The cofactor is Mn(2+).

The catalysed reaction is NAD(+) + (deoxyribonucleotide)n-3'-hydroxyl + 5'-phospho-(deoxyribonucleotide)m = (deoxyribonucleotide)n+m + AMP + beta-nicotinamide D-nucleotide.. In terms of biological role, DNA ligase that catalyzes the formation of phosphodiester linkages between 5'-phosphoryl and 3'-hydroxyl groups in double-stranded DNA using NAD as a coenzyme and as the energy source for the reaction. It is essential for DNA replication and repair of damaged DNA. In Roseiflexus sp. (strain RS-1), this protein is DNA ligase.